A 492-amino-acid chain; its full sequence is Probable malate:quinone oxidoreductase (492 aa).

It belongs to the MQO family. Requires FAD as cofactor.

The enzyme catalyses (S)-malate + a quinone = a quinol + oxaloacetate. It participates in carbohydrate metabolism; tricarboxylic acid cycle; oxaloacetate from (S)-malate (quinone route): step 1/1. The polypeptide is Probable malate:quinone oxidoreductase (Methylobacillus flagellatus (strain ATCC 51484 / DSM 6875 / VKM B-1610 / KT)).